Reading from the N-terminus, the 713-residue chain is Putative ERAD-associated E3 ubiquitin-protein ligase component (713 aa).

The N-terminal stretch at 1–20 is a signal peptide; sequence MQLLNFLICLFFIFKRCVFT. N-linked (GlcNAc...) asparagine glycosylation is found at Asn48 and Asn123. Sel1-like repeat units follow at residues 83–124 and 125–160; these read PESQ…TQNY and TYAL…HQIS. Residue Asn211 is glycosylated (N-linked (GlcNAc...) asparagine). Sel1-like repeat units follow at residues 212-248, 280-315, 490-525, and 527-562; these read ISAH…RLVN, SIAA…SLNH, IHSL…AIHP, and ALAY…MHDT. N-linked (GlcNAc...) asparagine glycosylation is present at Asn314. Positions 621–655 are disordered; it reads QLPPEPPTLQVDRTPQQPDPQETSESLPSPNTEEM. The span at 631–652 shows a compositional bias: polar residues; the sequence is VDRTPQQPDPQETSESLPSPNT. Residues 671 to 691 traverse the membrane as a helical segment; it reads GRFLETACVTLIVVVVGLVLM.

It belongs to the sel-1 family.

The protein resides in the endoplasmic reticulum membrane. In terms of biological role, component of the endoplasmic reticulum quality control (ERQC) system involved in ubiquitin-dependent degradation of missfolded endoplasmic reticulum proteins. The polypeptide is Putative ERAD-associated E3 ubiquitin-protein ligase component (Schizosaccharomyces pombe (strain 972 / ATCC 24843) (Fission yeast)).